The following is a 385-amino-acid chain: 4-hydroxy-3-methylbut-2-en-1-yl diphosphate synthase (flavodoxin) 1 (385 aa).

[4Fe-4S] cluster is bound by residues Cys-280, Cys-283, Cys-315, and Glu-322.

This sequence belongs to the IspG family. It depends on [4Fe-4S] cluster as a cofactor.

It catalyses the reaction (2E)-4-hydroxy-3-methylbut-2-enyl diphosphate + oxidized [flavodoxin] + H2O + 2 H(+) = 2-C-methyl-D-erythritol 2,4-cyclic diphosphate + reduced [flavodoxin]. The protein operates within isoprenoid biosynthesis; isopentenyl diphosphate biosynthesis via DXP pathway; isopentenyl diphosphate from 1-deoxy-D-xylulose 5-phosphate: step 5/6. Functionally, converts 2C-methyl-D-erythritol 2,4-cyclodiphosphate (ME-2,4cPP) into 1-hydroxy-2-methyl-2-(E)-butenyl 4-diphosphate. This Streptomyces avermitilis (strain ATCC 31267 / DSM 46492 / JCM 5070 / NBRC 14893 / NCIMB 12804 / NRRL 8165 / MA-4680) protein is 4-hydroxy-3-methylbut-2-en-1-yl diphosphate synthase (flavodoxin) 1.